Reading from the N-terminus, the 104-residue chain is Nucleoid-associated protein Dtur_0258 (104 aa).

Residues Glu84–Phe104 are disordered.

This sequence belongs to the YbaB/EbfC family. Homodimer.

The protein localises to the cytoplasm. It localises to the nucleoid. Binds to DNA and alters its conformation. May be involved in regulation of gene expression, nucleoid organization and DNA protection. This chain is Nucleoid-associated protein Dtur_0258, found in Dictyoglomus turgidum (strain DSM 6724 / Z-1310).